A 639-amino-acid chain; its full sequence is Chaperone protein DnaK (639 aa).

The residue at position 198 (threonine 198) is a Phosphothreonine; by autocatalysis. Residues 603–618 (AKAQTQGGAQEGAAKQ) show a composition bias toward low complexity. The tract at residues 603–639 (AKAQTQGGAQEGAAKQSNATADDVVDAEFEEVKDDKK) is disordered. The segment covering 625-639 (DVVDAEFEEVKDDKK) has biased composition (acidic residues).

Belongs to the heat shock protein 70 family.

Its function is as follows. Acts as a chaperone. This Shewanella sp. (strain MR-7) protein is Chaperone protein DnaK.